The sequence spans 189 residues: MRWNTFWGILCLSLLAVGTCQDDAENIEYKVSISGTSVELTCPLDSDENLKWEKNGQELPQKHDKHLVLQDFSEVEDSGYYVCYTPASNKNTYLYLKARVCEYCVEVDLTAVAIIIIVDICITLGLLMVIYYWSKNRKAKAKPVTRGTGAGSRPRGQNKERPPPVPNPDYEPIRKGQRDLYSGLNQRAV.

An N-terminal signal peptide occupies residues 1–21 (MRWNTFWGILCLSLLAVGTCQ). Residues 23-99 (DAENIEYKVS…KNTYLYLKAR (77 aa)) form the Ig-like domain. The Extracellular segment spans residues 23–108 (DAENIEYKVS…RVCEYCVEVD (86 aa)). The cysteines at positions 42 and 83 are disulfide-linked. Residues 109–134 (LTAVAIIIIVDICITLGLLMVIYYWS) form a helical membrane-spanning segment. Over 135 to 189 (KNRKAKAKPVTRGTGAGSRPRGQNKERPPPVPNPDYEPIRKGQRDLYSGLNQRAV) the chain is Cytoplasmic. A disordered region spans residues 143–189 (PVTRGTGAGSRPRGQNKERPPPVPNPDYEPIRKGQRDLYSGLNQRAV). The tract at residues 157 to 174 (QNKERPPPVPNPDYEPIR) is NUMB-binding region. The ITAM domain maps to 160-187 (ERPPPVPNPDYEPIRKGQRDLYSGLNQR). Residues 161 to 168 (RPPPVPNP) form a proline-rich sequence region. Phosphotyrosine is present on residues Tyr170 and Tyr181.

In terms of assembly, the TCR-CD3 complex is composed of a CD3D/CD3E and a CD3G/CD3E heterodimers that preferentially associate with TCRalpha and TCRbeta, respectively, to form TCRalpha/CD3E/CD3G and TCRbeta/CD3G/CD3E trimers. In turn, the hexamer interacts with CD3Z homodimer to form the TCR-CD3 complex. Alternatively, TCRalpha and TCRbeta can be replaced by TCRgamma and TCRdelta. Interacts with CD6. Interacts (via Proline-rich sequence) with NCK1; the interaction is ligand dependent but independent of tyrosine kinase activation. Phosphorylated on Tyr residues after T-cell receptor triggering by LCK in association with CD4/CD8.

The protein resides in the cell membrane. Its function is as follows. Part of the TCR-CD3 complex present on T-lymphocyte cell surface that plays an essential role in adaptive immune response. When antigen presenting cells (APCs) activate T-cell receptor (TCR), TCR-mediated signals are transmitted across the cell membrane by the CD3 chains CD3D, CD3E, CD3G and CD3Z. All CD3 chains contain immunoreceptor tyrosine-based activation motifs (ITAMs) in their cytoplasmic domain. Upon TCR engagement, these motifs become phosphorylated by Src family protein tyrosine kinases LCK and FYN, resulting in the activation of downstream signaling pathways. In addition of this role of signal transduction in T-cell activation, CD3E plays an essential role in correct T-cell development. Also participates in internalization and cell surface down-regulation of TCR-CD3 complexes via endocytosis sequences present in CD3E cytosolic region. In addition to its role as a TCR coreceptor, it serves as a receptor for ITPRIPL1. Ligand recognition inhibits T-cell activation by promoting interaction with NCK1, which prevents CD3E-ZAP70 interaction and blocks the ERK-NFkB signaling cascade and calcium influx. The protein is T-cell surface glycoprotein CD3 epsilon chain (Cd3e) of Mus musculus (Mouse).